The sequence spans 147 residues: Chorion class B protein B.L1 (147 aa).

The left arm stretch occupies residues 1–38; sequence IGCGRGCGGRGYGGLGYGGLGYGGLGYGGLGGGCGRGF. 4 repeat units span residues 11–15, 16–20, 21–25, and 26–30. A 4 X 5 AA tandem repeats of G-Y-G-G-L region spans residues 11–30; the sequence is GYGGLGYGGLGYGGLGYGGL. Positions 39–107 are central domain; sequence SGGGLPVATA…GNGAVGITRE (69 aa). Residues 108-147 are right arm (Gly-rich tandem repeats); that stretch reads GGLGYGAGYGGGYGLGYGGYGGGYGLGYGGYGGCGCGCGY.

The protein belongs to the chorion protein family.

In terms of biological role, this protein is one of many from the eggshell of the silk moth. This chain is Chorion class B protein B.L1, found in Bombyx mori (Silk moth).